Here is a 357-residue protein sequence, read N- to C-terminus: Isoflavone 7-O-methyltransferase (357 aa).

S-adenosyl-L-methionine is bound by residues 200–203 (VGGG), Asp224, 224–225 (DR), 244–245 (DM), and Lys258. His262 acts as the Proton acceptor in catalysis.

Belongs to the class I-like SAM-binding methyltransferase superfamily. Cation-independent O-methyltransferase family. COMT subfamily.

It catalyses the reaction a 7-hydroxyisoflavone + S-adenosyl-L-methionine = a 7-methoxyisoflavone + S-adenosyl-L-homocysteine + H(+). Functionally, 7-O-methyltransferase involved in the biosynthesis of isoformononetin. Can use daidzein as substrate, but not medicarpin or 2,7,4'-trihydroxyisoflavanone. The sequence is that of Isoflavone 7-O-methyltransferase (D7OMT) from Glycyrrhiza echinata (Licorice).